The sequence spans 392 residues: Protein FAM53C (392 aa).

At Met-1 the chain carries N-acetylmethionine. The segment at 78–119 (LRPPSRGNSPKEQPFSQVLRPEPPDPEKLPVPPAPPSKRHCR) is disordered. Residues 83–93 (RGNSPKEQPFS) show a composition bias toward polar residues. Residues Ser-122, Ser-162, Ser-232, Ser-234, Ser-255, and Ser-273 each carry the phosphoserine modification. 2 disordered regions span residues 141 to 167 (LWTPIKHRGSGGGGGPQVPHQSPPKRV) and 204 to 294 (RPCA…EDPR). The segment covering 241 to 256 (ASRFLPSARSSPASSP) has biased composition (low complexity). Positions 278 to 294 (LDARKTGVKRRHEEDPR) are enriched in basic and acidic residues. At Ser-299 the chain carries Phosphoserine. Positions 341 to 364 (ASCSPTGGSSQVLSESEEEEEGAV) are disordered.

The protein belongs to the FAM53 family.

The chain is Protein FAM53C from Homo sapiens (Human).